The following is a 155-amino-acid chain: MPNFIEGNLKADGKKFAIIVARFNSFISDKLLDGALDSLVRSGATDSDIDVVRVPGAYEIPLIAKKLAASLKYDAVICLGAVIRGATPHFDVVVNEVSKGSAQVSLETGVPVLFGVLTTETIEQAIERSGTKAGNKGSDVAIAAIEMANLVDALQ.

5-amino-6-(D-ribitylamino)uracil is bound by residues F23, 57–59 (AYE), and 81–83 (AVI). 86–87 (AT) lines the (2S)-2-hydroxy-3-oxobutyl phosphate pocket. H89 serves as the catalytic Proton donor. F114 contacts 5-amino-6-(D-ribitylamino)uracil. Residue R128 coordinates (2S)-2-hydroxy-3-oxobutyl phosphate.

Belongs to the DMRL synthase family.

It carries out the reaction (2S)-2-hydroxy-3-oxobutyl phosphate + 5-amino-6-(D-ribitylamino)uracil = 6,7-dimethyl-8-(1-D-ribityl)lumazine + phosphate + 2 H2O + H(+). It participates in cofactor biosynthesis; riboflavin biosynthesis; riboflavin from 2-hydroxy-3-oxobutyl phosphate and 5-amino-6-(D-ribitylamino)uracil: step 1/2. Catalyzes the formation of 6,7-dimethyl-8-ribityllumazine by condensation of 5-amino-6-(D-ribitylamino)uracil with 3,4-dihydroxy-2-butanone 4-phosphate. This is the penultimate step in the biosynthesis of riboflavin. The chain is 6,7-dimethyl-8-ribityllumazine synthase from Desulfotalea psychrophila (strain LSv54 / DSM 12343).